A 461-amino-acid chain; its full sequence is Elongation factor 1-alpha (461 aa).

Glycine 2 carries the n,N,N-trimethylglycine modification. A tr-type G domain is found at 5 to 242 (KIHINIVVIG…DAILPPSRPT (238 aa)). A G1 region spans residues 14 to 21 (GHVDSGKS). 14–21 (GHVDSGKS) is a GTP binding site. Positions 70-74 (GITID) are G2. A G3 region spans residues 91–94 (DAPG). Residues 153-156 (NKMD) and 194-196 (SGW) each bind GTP. Residues 153-156 (NKMD) form a G4 region. Residues 194 to 196 (SGW) form a G5 region. A 5-glutamyl glycerylphosphorylethanolamine mark is found at glutamate 301 and glutamate 374.

The protein belongs to the TRAFAC class translation factor GTPase superfamily. Classic translation factor GTPase family. EF-Tu/EF-1A subfamily.

It is found in the cytoplasm. The catalysed reaction is GTP + H2O = GDP + phosphate + H(+). Translation elongation factor that catalyzes the GTP-dependent binding of aminoacyl-tRNA (aa-tRNA) to the A-site of ribosomes during the elongation phase of protein synthesis. Base pairing between the mRNA codon and the aa-tRNA anticodon promotes GTP hydrolysis, releasing the aa-tRNA from EEF1A1 and allowing its accommodation into the ribosome. The growing protein chain is subsequently transferred from the P-site peptidyl tRNA to the A-site aa-tRNA, extending it by one amino acid through ribosome-catalyzed peptide bond formation. The protein is Elongation factor 1-alpha (eef1a) of Oryzias latipes (Japanese rice fish).